A 134-amino-acid polypeptide reads, in one-letter code: Shikimate kinase (134 aa).

The protein belongs to the shikimate kinase family.

The protein resides in the cytoplasm. It carries out the reaction shikimate + ATP = 3-phosphoshikimate + ADP + H(+). It functions in the pathway metabolic intermediate biosynthesis; chorismate biosynthesis; chorismate from D-erythrose 4-phosphate and phosphoenolpyruvate: step 5/7. In Neisseria gonorrhoeae, this protein is Shikimate kinase (aroK).